Here is a 284-residue protein sequence, read N- to C-terminus: Probable endonuclease 4 (284 aa).

9 residues coordinate Zn(2+): histidine 69, histidine 109, glutamate 145, aspartate 179, histidine 182, histidine 216, aspartate 229, histidine 231, and glutamate 261.

It belongs to the AP endonuclease 2 family. The cofactor is Zn(2+).

It catalyses the reaction Endonucleolytic cleavage to 5'-phosphooligonucleotide end-products.. Its function is as follows. Endonuclease IV plays a role in DNA repair. It cleaves phosphodiester bonds at apurinic or apyrimidinic (AP) sites, generating a 3'-hydroxyl group and a 5'-terminal sugar phosphate. This is Probable endonuclease 4 from Klebsiella pneumoniae (strain 342).